Reading from the N-terminus, the 479-residue chain is Small ribosomal subunit protein bS1 (479 aa).

S1 motif domains are found at residues 36–105, 123–188, 209–277, and 294–363; these read GDIV…LSKK, DEAV…LSRR, GAIR…LSLK, and GQIV…LSLK. Residues 429-466 are disordered; sequence TAQMEKFAAAEAEAANAPVSNGSSRSEESSGGTLASDA. Positions 437–460 are enriched in low complexity; that stretch reads AAEAEAANAPVSNGSSRSEESSGG.

Belongs to the bacterial ribosomal protein bS1 family. As to quaternary structure, binds uncharacterized protein MSMEG_2731/MSMEI_2664.

Binds mRNA, facilitating recognition of most mRNAs by the 30S ribosomal subunit during translation initiation. Plays a role in trans-translation; binds tmRNA (the product of the ssrA gene). Binds very poorly to pyrazinoic acid (POA), the active form of the prodrug pyrazinamide (PZA); POA does not disrupt trans-translation in this organism. M.smegmatis is resistant to the antibiotic PZA. In trans-translation Ala-aminoacylated transfer-messenger RNA (tmRNA, product of the ssrA gene; the 2 termini fold to resemble tRNA(Ala) while it encodes a short internal open reading frame (the tag peptide)) acts like a tRNA, entering the A-site of the ribosome and displacing the stalled mRNA (which is subsequently degraded). The ribosome then switches to translate the ORF on the tmRNA, the nascent peptide is terminated with the 'tag peptide' encoded by the tmRNA and thus targeted for degradation. The protein is Small ribosomal subunit protein bS1 (rpsA) of Mycolicibacterium smegmatis (strain ATCC 700084 / mc(2)155) (Mycobacterium smegmatis).